A 146-amino-acid polypeptide reads, in one-letter code: Protein new-glue 3 (146 aa).

A signal peptide spans 1–23 (MRYSCVLLLLATVACLLIPQTGG). Positions 23 to 146 (GSTATTTSTS…RRARSARRLS (124 aa)) are disordered. Low complexity predominate over residues 24–66 (STATTTSTSASATTTTSASATTTTASDTTTTTAATTTTSSSSS). 4 tandem repeats follow at residues 31 to 38 (TSASATTT), 39 to 46 (TSASATTT), 47 to 53 (TASDTTT), and 54 to 61 (TTAATTTT). The 4 X 8 AA approximate tandem repeats of T-S-A-S-A-T-T-T stretch occupies residues 31 to 61 (TSASATTTTSASATTTTASDTTTTTAATTTT). The span at 67-92 (KSKKKKRTYHYTRHVYRPKRIRHIYR) shows a compositional bias: basic residues. Residues 93-106 (HKADDDESSTDRTS) show a composition bias toward basic and acidic residues. A compositionally biased stretch (low complexity) spans 116 to 132 (SSSSSSSGSTSSRSGNS). The span at 133–146 (RIRRRRARSARRLS) shows a compositional bias: basic residues.

In terms of tissue distribution, salivary gland specific.

It localises to the secreted. The sequence is that of Protein new-glue 3 (ng3) from Drosophila melanogaster (Fruit fly).